Consider the following 523-residue polypeptide: Bifunctional purine biosynthesis protein PurH (523 aa).

The region spanning 1–145 (MIKQALLSVS…KNHRDVTVIV (145 aa)) is the MGS-like domain.

Belongs to the PurH family.

It catalyses the reaction (6R)-10-formyltetrahydrofolate + 5-amino-1-(5-phospho-beta-D-ribosyl)imidazole-4-carboxamide = 5-formamido-1-(5-phospho-D-ribosyl)imidazole-4-carboxamide + (6S)-5,6,7,8-tetrahydrofolate. It carries out the reaction IMP + H2O = 5-formamido-1-(5-phospho-D-ribosyl)imidazole-4-carboxamide. The protein operates within purine metabolism; IMP biosynthesis via de novo pathway; 5-formamido-1-(5-phospho-D-ribosyl)imidazole-4-carboxamide from 5-amino-1-(5-phospho-D-ribosyl)imidazole-4-carboxamide (10-formyl THF route): step 1/1. It participates in purine metabolism; IMP biosynthesis via de novo pathway; IMP from 5-formamido-1-(5-phospho-D-ribosyl)imidazole-4-carboxamide: step 1/1. This is Bifunctional purine biosynthesis protein PurH from Cupriavidus pinatubonensis (strain JMP 134 / LMG 1197) (Cupriavidus necator (strain JMP 134)).